Reading from the N-terminus, the 290-residue chain is MDKIIKSIAQSGAFRAYVLDSTETVALAQEKHNTLSSSTVALGRTLIANQILAANQKGDSKITVKVIGDSSFGHIISVADTKGHVKGYIQNTGVDIKKTATGEVLVGPFMGNGHFVTIIDYGTGNPYTSTTPLITGEIGEDFAYYLTESEQTPSAIGLNVLLDENDKVKVAGGFMVQVLPEASEEEIARYEKRLQEMPAISHLLASKNHVDALLEAIYGDEPYKRLSEEPLSFQCDCSRERFEAALMTLPKADLQAMIDEDKGAEIVCQFCGTKYQFNESDLEAIINDKA.

2 disulfide bridges follow: Cys235–Cys237 and Cys268–Cys271.

Belongs to the HSP33 family. Post-translationally, under oxidizing conditions two disulfide bonds are formed involving the reactive cysteines. Under reducing conditions zinc is bound to the reactive cysteines and the protein is inactive.

It is found in the cytoplasm. Functionally, redox regulated molecular chaperone. Protects both thermally unfolding and oxidatively damaged proteins from irreversible aggregation. Plays an important role in the bacterial defense system toward oxidative stress. The protein is 33 kDa chaperonin of Streptococcus pyogenes serotype M49 (strain NZ131).